Reading from the N-terminus, the 458-residue chain is NADH-quinone oxidoreductase subunit N 1 (458 aa).

A run of 14 helical transmembrane segments spans residues 12 to 32 (ALIP…AGLL), 37 to 57 (EVLV…IPSF), 70 to 90 (FLTI…LLVL), 101 to 121 (FNES…LVSA), 124 to 144 (LISF…LVGI), 159 to 179 (FMLG…IYGA), 199 to 219 (ILIG…LVPF), 230 to 250 (APTP…LGAF), 266 to 286 (SNFL…FALI), 293 to 313 (MLAY…IVGT), 321 to 341 (VAYM…VIAF), 361 to 381 (IAML…GFIV), 393 to 413 (GFTW…YYYL), and 438 to 458 (VAIL…LFLI).

It belongs to the complex I subunit 2 family. As to quaternary structure, NDH-1 is composed of 14 different subunits. Subunits NuoA, H, J, K, L, M, N constitute the membrane sector of the complex.

It localises to the cell inner membrane. It catalyses the reaction a quinone + NADH + 5 H(+)(in) = a quinol + NAD(+) + 4 H(+)(out). NDH-1 shuttles electrons from NADH, via FMN and iron-sulfur (Fe-S) centers, to quinones in the respiratory chain. The immediate electron acceptor for the enzyme in this species is believed to be ubiquinone. Couples the redox reaction to proton translocation (for every two electrons transferred, four hydrogen ions are translocated across the cytoplasmic membrane), and thus conserves the redox energy in a proton gradient. The polypeptide is NADH-quinone oxidoreductase subunit N 1 (Thermodesulfovibrio yellowstonii (strain ATCC 51303 / DSM 11347 / YP87)).